Consider the following 342-residue polypeptide: Phosphate acyltransferase (342 aa).

The protein belongs to the PlsX family. Homodimer. Probably interacts with PlsY.

It localises to the cytoplasm. It carries out the reaction a fatty acyl-[ACP] + phosphate = an acyl phosphate + holo-[ACP]. The protein operates within lipid metabolism; phospholipid metabolism. Its function is as follows. Catalyzes the reversible formation of acyl-phosphate (acyl-PO(4)) from acyl-[acyl-carrier-protein] (acyl-ACP). This enzyme utilizes acyl-ACP as fatty acyl donor, but not acyl-CoA. This chain is Phosphate acyltransferase, found in Shewanella woodyi (strain ATCC 51908 / MS32).